A 252-amino-acid polypeptide reads, in one-letter code: Phosphate import ATP-binding protein PstB 1 (252 aa).

The ABC transporter domain occupies 6–247; that stretch reads LQVSDLSVYY…PKHKETEDYI (242 aa). Residue 38-45 coordinates ATP; that stretch reads GPSGSGKS.

It belongs to the ABC transporter superfamily. Phosphate importer (TC 3.A.1.7) family. In terms of assembly, the complex is composed of two ATP-binding proteins (PstB), two transmembrane proteins (PstC and PstA) and a solute-binding protein (PstS).

The protein resides in the cell membrane. The catalysed reaction is phosphate(out) + ATP + H2O = ADP + 2 phosphate(in) + H(+). Part of the ABC transporter complex PstSACB involved in phosphate import. Responsible for energy coupling to the transport system. The polypeptide is Phosphate import ATP-binding protein PstB 1 (Streptococcus agalactiae serotype Ia (strain ATCC 27591 / A909 / CDC SS700)).